The following is a 312-amino-acid chain: DNA primase small subunit PriS (312 aa).

Catalysis depends on residues Asp88, Asp90, and Asp215.

Belongs to the eukaryotic-type primase small subunit family. As to quaternary structure, heterodimer of a small subunit (PriS) and a large subunit (PriL). Requires Mg(2+) as cofactor. The cofactor is Mn(2+).

Functionally, catalytic subunit of DNA primase, an RNA polymerase that catalyzes the synthesis of short RNA molecules used as primers for DNA polymerase during DNA replication. The small subunit contains the primase catalytic core and has DNA synthesis activity on its own. Binding to the large subunit stabilizes and modulates the activity, increasing the rate of DNA synthesis while decreasing the length of the DNA fragments, and conferring RNA synthesis capability. The DNA polymerase activity may enable DNA primase to also catalyze primer extension after primer synthesis. May also play a role in DNA repair. The chain is DNA primase small subunit PriS from Pyrobaculum aerophilum (strain ATCC 51768 / DSM 7523 / JCM 9630 / CIP 104966 / NBRC 100827 / IM2).